Here is a 222-residue protein sequence, read N- to C-terminus: Protein-L-isoaspartate O-methyltransferase (222 aa).

Ser-72 is an active-site residue.

Belongs to the methyltransferase superfamily. L-isoaspartyl/D-aspartyl protein methyltransferase family.

The protein resides in the cytoplasm. It carries out the reaction [protein]-L-isoaspartate + S-adenosyl-L-methionine = [protein]-L-isoaspartate alpha-methyl ester + S-adenosyl-L-homocysteine. Functionally, catalyzes the methyl esterification of L-isoaspartyl residues in peptides and proteins that result from spontaneous decomposition of normal L-aspartyl and L-asparaginyl residues. It plays a role in the repair and/or degradation of damaged proteins. This chain is Protein-L-isoaspartate O-methyltransferase, found in Picosynechococcus sp. (strain ATCC 27264 / PCC 7002 / PR-6) (Agmenellum quadruplicatum).